Reading from the N-terminus, the 1740-residue chain is DNA polymerase (1740 aa).

Residues 472-491 (IEMPHNQEDSDSEKEDEDTD) form a disordered region. Acidic residues predominate over residues 480 to 491 (DSDSEKEDEDTD). The 146-residue stretch at 1189–1334 (VWGFFMGDGS…LFYLLKSLGY (146 aa)) folds into the DOD-type homing endonuclease domain. Residues 1673–1701 (PKESGSKTAKKPYQSQKLQKTKSSNKSQI) form a disordered region. Residues 1685–1700 (YQSQKLQKTKSSNKSQ) show a composition bias toward polar residues.

It belongs to the DNA polymerase type-B family. This protein undergoes a protein self splicing that involves a post-translational excision of the intervening region (intein) followed by peptide ligation.

It carries out the reaction DNA(n) + a 2'-deoxyribonucleoside 5'-triphosphate = DNA(n+1) + diphosphate. The sequence is that of DNA polymerase (POLB) from Acanthamoeba polyphaga (Amoeba).